Consider the following 101-residue polypeptide: Large ribosomal subunit protein uL24 (101 aa).

The protein belongs to the universal ribosomal protein uL24 family. Part of the 50S ribosomal subunit.

In terms of biological role, one of two assembly initiator proteins, it binds directly to the 5'-end of the 23S rRNA, where it nucleates assembly of the 50S subunit. One of the proteins that surrounds the polypeptide exit tunnel on the outside of the subunit. The chain is Large ribosomal subunit protein uL24 from Dinoroseobacter shibae (strain DSM 16493 / NCIMB 14021 / DFL 12).